The following is a 91-amino-acid chain: Small ribosomal subunit protein bS20 (91 aa).

Residues 1 to 23 (MANTPSAKKRAKQAEKRRSHNAS) form a disordered region. The span at 7-20 (AKKRAKQAEKRRSH) shows a compositional bias: basic residues.

It belongs to the bacterial ribosomal protein bS20 family.

Functionally, binds directly to 16S ribosomal RNA. The sequence is that of Small ribosomal subunit protein bS20 from Pseudomonas aeruginosa (strain LESB58).